A 370-amino-acid chain; its full sequence is ATP/GTP phosphatase (370 aa).

The catalysed reaction is ATP + H2O = ADP + phosphate + H(+). It catalyses the reaction GTP + H2O = GDP + phosphate + H(+). Functionally, has nucleotide phosphatase activity toward ATP and GTP, but not toward CTP, TTP and ADP. The protein is ATP/GTP phosphatase of Helicobacter pylori (strain ATCC 700392 / 26695) (Campylobacter pylori).